The chain runs to 207 residues: Guanylate kinase (207 aa).

A Guanylate kinase-like domain is found at 4 to 184 (GTLYIVSAPS…ALLDLKTIIR (181 aa)). 11-18 (APSGAGKS) lines the ATP pocket.

The protein belongs to the guanylate kinase family.

It localises to the cytoplasm. It catalyses the reaction GMP + ATP = GDP + ADP. Essential for recycling GMP and indirectly, cGMP. The protein is Guanylate kinase of Sodalis glossinidius (strain morsitans).